Here is a 255-residue protein sequence, read N- to C-terminus: GTP cyclohydrolase III 1 (255 aa).

The protein belongs to the archaeal-type GTP cyclohydrolase family.

It carries out the reaction GTP + 3 H2O = 2-amino-5-formylamino-6-(5-phospho-D-ribosylamino)pyrimidin-4(3H)-one + 2 phosphate + 2 H(+). In terms of biological role, catalyzes the formation of 2-amino-5-formylamino-6-ribofuranosylamino-4(3H)-pyrimidinone ribonucleotide monophosphate and inorganic phosphate from GTP. Also has an independent pyrophosphate phosphohydrolase activity. This Halobacterium salinarum (strain ATCC 700922 / JCM 11081 / NRC-1) (Halobacterium halobium) protein is GTP cyclohydrolase III 1 (gch31).